Here is a 256-residue protein sequence, read N- to C-terminus: Thiazole synthase (256 aa).

Lysine 96 (schiff-base intermediate with DXP) is an active-site residue. Residues glycine 157, 183–184 (AG), and 205–206 (NT) each bind 1-deoxy-D-xylulose 5-phosphate.

The protein belongs to the ThiG family. Homotetramer. Forms heterodimers with either ThiH or ThiS.

The protein localises to the cytoplasm. It carries out the reaction [ThiS sulfur-carrier protein]-C-terminal-Gly-aminoethanethioate + 2-iminoacetate + 1-deoxy-D-xylulose 5-phosphate = [ThiS sulfur-carrier protein]-C-terminal Gly-Gly + 2-[(2R,5Z)-2-carboxy-4-methylthiazol-5(2H)-ylidene]ethyl phosphate + 2 H2O + H(+). The protein operates within cofactor biosynthesis; thiamine diphosphate biosynthesis. Functionally, catalyzes the rearrangement of 1-deoxy-D-xylulose 5-phosphate (DXP) to produce the thiazole phosphate moiety of thiamine. Sulfur is provided by the thiocarboxylate moiety of the carrier protein ThiS. In vitro, sulfur can be provided by H(2)S. This is Thiazole synthase from Clostridium beijerinckii (strain ATCC 51743 / NCIMB 8052) (Clostridium acetobutylicum).